The primary structure comprises 194 residues: MSNLVPMVVEQTSKGERSYDIFSRLLKDRIIMLSGEVNDVTANLVVAQLLFLESEDPDKDIHLYINSPGGSITSGMAIYDTMQYIKPDVSTICIGMAASMGAFLLSSGAKGKRFALPNAEIMIHQPLGGFQGQATDIDIHAKRILKIKDKLNQILSENTNQPLEKIKVDVERDYFMEASEAVEYGLIDKVIERK.

Ser-99 acts as the Nucleophile in catalysis. Residue His-124 is part of the active site.

This sequence belongs to the peptidase S14 family. As to quaternary structure, fourteen ClpP subunits assemble into 2 heptameric rings which stack back to back to give a disk-like structure with a central cavity, resembling the structure of eukaryotic proteasomes.

The protein localises to the cytoplasm. It catalyses the reaction Hydrolysis of proteins to small peptides in the presence of ATP and magnesium. alpha-casein is the usual test substrate. In the absence of ATP, only oligopeptides shorter than five residues are hydrolyzed (such as succinyl-Leu-Tyr-|-NHMec, and Leu-Tyr-Leu-|-Tyr-Trp, in which cleavage of the -Tyr-|-Leu- and -Tyr-|-Trp bonds also occurs).. Functionally, cleaves peptides in various proteins in a process that requires ATP hydrolysis. Has a chymotrypsin-like activity. Plays a major role in the degradation of misfolded proteins. This Clostridium perfringens (strain ATCC 13124 / DSM 756 / JCM 1290 / NCIMB 6125 / NCTC 8237 / Type A) protein is ATP-dependent Clp protease proteolytic subunit.